We begin with the raw amino-acid sequence, 376 residues long: Riboflavin biosynthesis protein RibD (376 aa).

The segment at 1 to 157 is deaminase; it reads MCFPLPSNSF…PIFFHYIQTK (157 aa). The CMP/dCMP-type deaminase domain maps to 13-135; sequence MTDLDYMRRA…QLRQAGVEVV (123 aa). His62 is a Zn(2+) binding site. The active-site Proton donor is Glu64. Zn(2+) contacts are provided by Cys87 and Cys96. Residues 158-376 form a reductase region; the sequence is RPYVLMKYAM…LLDYVVISPL (219 aa). Ala166 lines the NADP(+) pocket. Ser180 is a substrate binding site. Trp182 provides a ligand contact to NADP(+). A substrate-binding site is contributed by Arg196. NADP(+) contacts are provided by Thr208 and Asp212. Substrate-binding residues include Leu216 and Arg219. Position 233 (Ser233) interacts with NADP(+). Residue Glu304 participates in substrate binding. 306–312 contributes to the NADP(+) binding site; sequence GSSLNFS.

It in the N-terminal section; belongs to the cytidine and deoxycytidylate deaminase family. This sequence in the C-terminal section; belongs to the HTP reductase family. Zn(2+) serves as cofactor.

It catalyses the reaction 2,5-diamino-6-hydroxy-4-(5-phosphoribosylamino)-pyrimidine + H2O + H(+) = 5-amino-6-(5-phospho-D-ribosylamino)uracil + NH4(+). It carries out the reaction 5-amino-6-(5-phospho-D-ribitylamino)uracil + NADP(+) = 5-amino-6-(5-phospho-D-ribosylamino)uracil + NADPH + H(+). It participates in cofactor biosynthesis; riboflavin biosynthesis; 5-amino-6-(D-ribitylamino)uracil from GTP: step 2/4. It functions in the pathway cofactor biosynthesis; riboflavin biosynthesis; 5-amino-6-(D-ribitylamino)uracil from GTP: step 3/4. In terms of biological role, converts 2,5-diamino-6-(ribosylamino)-4(3h)-pyrimidinone 5'-phosphate into 5-amino-6-(ribosylamino)-2,4(1h,3h)-pyrimidinedione 5'-phosphate. The chain is Riboflavin biosynthesis protein RibD (ribD) from Actinobacillus pleuropneumoniae (Haemophilus pleuropneumoniae).